The chain runs to 755 residues: Zinc transporter ZIP6 (755 aa).

A signal peptide spans 1–28 (MARKLSVILILTFALSVTNPLHELKAAA). Topologically, residues 29 to 325 (FPQTTEKISP…PKTYSLQIAW (297 aa)) are extracellular. N-linked (GlcNAc...) asparagine glycosylation occurs at Asn67. A compositionally biased stretch (basic and acidic residues) spans 95 to 128 (DHDHHSDHEHHSDHERHSDHEHHSEHEHHSDHDH). 2 disordered regions span residues 95–186 (DHDH…SASE) and 202–246 (LETI…SVSE). Basic residues predominate over residues 129–144 (HSHHNHAASGKNKRKA). 2 stretches are compositionally biased toward basic and acidic residues: residues 145–159 (LCPD…KDPR) and 167–179 (HRPE…RNVK). A compositionally biased stretch (low complexity) spans 219-234 (SSSTPPSVTSKSRVSR). Asn241, Asn266, and Asn283 each carry an N-linked (GlcNAc...) asparagine glycan. The helical transmembrane segment at 326 to 346 (VGGFIAISIISFLSLLGVILV) threads the bilayer. Over 347-355 (PLMNRVFFK) the chain is Cytoplasmic. The helical transmembrane segment at 356–376 (FLLSFLVALAVGTLSGDAFLH) threads the bilayer. Residues 377-423 (LLPHSHASHHHSHSHEEPAMEMKRGPLFSHLSSQNIEESAYFDSTWK) lie on the Extracellular side of the membrane. Residues 424 to 444 (GLTALGGLYFMFLVEHVLTLI) traverse the membrane as a helical segment. The Cytoplasmic segment spans residues 445–657 (KQFKDKKKKN…LKAGMTVKQA (213 aa)). Positions 464-480 (VEIKKQLSKYESQLSTN) form a coiled coil. Phosphoserine occurs at positions 471 and 478. A helical membrane pass occupies residues 658 to 678 (VLYNALSAMLAYLGMATGIFI). The Extracellular segment spans residues 679-686 (GHYAENVS). A glycan (N-linked (GlcNAc...) asparagine) is linked at Asn684. A helical transmembrane segment spans residues 687–707 (MWIFALTAGLFMYVALVDMVP). Over 708 to 724 (EMLHNDASDHGCSRWGY) the chain is Cytoplasmic. A helical membrane pass occupies residues 725–745 (FFLQNAGMLLGFGIMLLISIF). At 746–755 (EHKIVFRINF) the chain is on the extracellular side.

This sequence belongs to the ZIP transporter (TC 2.A.5) family. Interacts with SLC39A10; which triggers cells to undergo EMT and mitosis. Found in a complex with SLC39A6, SLC39A10 and with the 'Ser-727' phosphorylated form of STAT3 throughout mitosis. Found in a complex with SLC39A6, SLC39A10 and with NCAM1; this complex controls NCAM1 phosphorylation and integration into focal adhesion complexes during epithelial-to-mesenchymal transition (EMT). Found in a complex with SLC39A6, SLC39A10 and with GSK3B that controls NCAM1 phosphorylation. Post-translationally, cleaved on the N-terminus before locating to the plasma membrane. In terms of processing, N-glycosylated. Phosphorylated by ZAP70 in response to TCR stimulation leading to its activation. In terms of tissue distribution, highly expressed in the breast, prostate, placenta, kidney, pituitary and corpus callosum. Weakly expressed in heart and intestine. Also highly expressed in cells derived from an adenocarcinoma of the cervix and lung carcinoma.

It is found in the cell membrane. The protein resides in the cell projection. The protein localises to the lamellipodium membrane. It localises to the membrane raft. Its subcellular location is the apical cell membrane. It catalyses the reaction Zn(2+)(in) = Zn(2+)(out). Zinc-influx transporter which plays a role in zinc homeostasis and in the induction of epithelial-to-mesenchymal transition (EMT). When associated with SLC39A10, the heterodimer formed by SLC39A10 and SLC39A6 mediates cellular zinc uptake to trigger cells to undergo epithelial- to-mesenchymal transition (EMT). The SLC39A10-SLC39A6 heterodimer also controls NCAM1 phosphorylation and its integration into focal adhesion complexes during EMT. Zinc influx inactivates GSK3B, enabling unphosphorylated SNAI1 in the nucleus to down-regulate adherence genes such as CDH1, causing loss of cell adherence. In addition, the SLC39A10-SLC39A6 heterodimer plays an essentiel role in initiating mitosis by importing zinc into cells to initiate a pathway resulting in the onset of mitosis. Participates in the T-cell receptor signaling regulation by mediating cellular zinc uptake into activated lymphocytes. Regulates the zinc influx necessary for proper meiotic progression to metaphase II (MII) that allows the oocyte-to-egg transition. The chain is Zinc transporter ZIP6 from Homo sapiens (Human).